The chain runs to 47 residues: Protein PsbN (47 aa).

The helical transmembrane segment at 7–29 threads the bilayer; that stretch reads VAISISCLLISFTGYALYTAFGN.

Belongs to the PsbN family.

The protein localises to the plastid membrane. In terms of biological role, may play a role in photosystem I and II biogenesis. The polypeptide is Protein PsbN (Aneura mirabilis (Parasitic liverwort)).